Consider the following 255-residue polypeptide: Small ribosomal subunit protein eS1 (255 aa).

Residues 1–18 (MAVGKNKRLSKGKKGLKK) show a composition bias toward basic residues. The interval 1–28 (MAVGKNKRLSKGKKGLKKRTQDPFSRKD) is disordered. A2 carries the post-translational modification N-acetylalanine; partial. Over residues 19-28 (RTQDPFSRKD) the composition is skewed to basic and acidic residues.

Belongs to the eukaryotic ribosomal protein eS1 family. In terms of assembly, component of the small ribosomal subunit. Mature ribosomes consist of a small (40S) and a large (60S) subunit. The 40S subunit contains about 33 different proteins and 1 molecule of RNA (18S). The 60S subunit contains about 49 different proteins and 3 molecules of RNA (25S, 5.8S and 5S).

The protein resides in the cytoplasm. This is Small ribosomal subunit protein eS1 from Ajellomyces capsulatus (strain H143) (Darling's disease fungus).